A 324-amino-acid polypeptide reads, in one-letter code: Ribose-phosphate pyrophosphokinase 1 (324 aa).

ATP contacts are provided by residues 39–41 and 98–99; these read DGE and RQ. Positions 132 and 174 each coordinate Mg(2+). The active site involves Lys-197. Residues Arg-199, Asp-223, and 227 to 231 contribute to the D-ribose 5-phosphate site; that span reads DTAGT.

It belongs to the ribose-phosphate pyrophosphokinase family. Class I subfamily. As to quaternary structure, homohexamer. Mg(2+) is required as a cofactor.

Its subcellular location is the cytoplasm. The enzyme catalyses D-ribose 5-phosphate + ATP = 5-phospho-alpha-D-ribose 1-diphosphate + AMP + H(+). The protein operates within metabolic intermediate biosynthesis; 5-phospho-alpha-D-ribose 1-diphosphate biosynthesis; 5-phospho-alpha-D-ribose 1-diphosphate from D-ribose 5-phosphate (route I): step 1/1. Involved in the biosynthesis of the central metabolite phospho-alpha-D-ribosyl-1-pyrophosphate (PRPP) via the transfer of pyrophosphoryl group from ATP to 1-hydroxyl of ribose-5-phosphate (Rib-5-P). The sequence is that of Ribose-phosphate pyrophosphokinase 1 from Lactococcus lactis subsp. lactis (strain IL1403) (Streptococcus lactis).